A 599-amino-acid polypeptide reads, in one-letter code: Elongation factor 4 (599 aa).

One can recognise a tr-type G domain in the interval 5 to 187 (SHIRNFSIIA…RLVHTIPAPE (183 aa)). GTP contacts are provided by residues 17-22 (DHGKST) and 134-137 (NKMD).

Belongs to the TRAFAC class translation factor GTPase superfamily. Classic translation factor GTPase family. LepA subfamily.

Its subcellular location is the cell inner membrane. The catalysed reaction is GTP + H2O = GDP + phosphate + H(+). In terms of biological role, required for accurate and efficient protein synthesis under certain stress conditions. May act as a fidelity factor of the translation reaction, by catalyzing a one-codon backward translocation of tRNAs on improperly translocated ribosomes. Back-translocation proceeds from a post-translocation (POST) complex to a pre-translocation (PRE) complex, thus giving elongation factor G a second chance to translocate the tRNAs correctly. Binds to ribosomes in a GTP-dependent manner. The protein is Elongation factor 4 of Pseudomonas putida (strain ATCC 47054 / DSM 6125 / CFBP 8728 / NCIMB 11950 / KT2440).